The sequence spans 65 residues: Large ribosomal subunit protein bL35 (65 aa).

The tract at residues 1–28 (MPKIKTNRGAAKRFRKTGSGKIRRNKAF) is disordered. The span at 10-26 (AAKRFRKTGSGKIRRNK) shows a compositional bias: basic residues.

The protein belongs to the bacterial ribosomal protein bL35 family.

In Syntrophotalea carbinolica (strain DSM 2380 / NBRC 103641 / GraBd1) (Pelobacter carbinolicus), this protein is Large ribosomal subunit protein bL35.